The sequence spans 376 residues: Probable sister chromatid cohesion protein DCC1 (376 aa).

The segment at 213-232 (QKSPTNSGGGGEEIKGGGGD) is disordered. The span at 219 to 232 (SGGGGEEIKGGGGD) shows a compositional bias: gly residues.

The protein belongs to the DCC1 family.

It is found in the nucleus. In terms of biological role, loads PCNA onto primed templates regulating velocity, spacing and restart activity of replication forks. May couple DNA replication to sister chromatid cohesion. In Dictyostelium discoideum (Social amoeba), this protein is Probable sister chromatid cohesion protein DCC1.